The sequence spans 287 residues: 1-acyl-sn-glycerol-3-phosphate acyltransferase alpha (287 aa).

Positions 1–26 are cleaved as a signal peptide; it reads MELWPGAGTLLLLLFLLLLLLLPTLW. The Lumenal portion of the chain corresponds to 27–37; that stretch reads FCSPSAKYFFK. A helical membrane pass occupies residues 38 to 58; it reads MAFYNGWILFLAVLAIPVCAV. At 59–127 the chain is on the cytoplasmic side; the sequence is RGRNVENMKI…PGHCVPIAKR (69 aa). The HXXXXD motif signature appears at 104 to 109; the sequence is HQSSLD. The chain crosses the membrane as a helical span at residues 128–148; sequence ELLWAGSAGLACWLAGVIFID. Residues 149-192 lie on the Lumenal side of the membrane; that stretch reads RKRTGDAISVMSEVAQTLLTQDVRVWVFPEGTRNHNGSMLPFKR. Residues 178–181 carry the EGTR motif motif; that stretch reads EGTR.

Belongs to the 1-acyl-sn-glycerol-3-phosphate acyltransferase family.

The protein localises to the endoplasmic reticulum membrane. It catalyses the reaction a 1-acyl-sn-glycero-3-phosphate + an acyl-CoA = a 1,2-diacyl-sn-glycero-3-phosphate + CoA. The enzyme catalyses 1-(9Z-octadecenoyl)-sn-glycero-3-phosphate + (9Z)-octadecenoyl-CoA = 1,2-di-(9Z-octadecenoyl)-sn-glycero-3-phosphate + CoA. The catalysed reaction is 1-(9Z-octadecenoyl)-sn-glycero-3-phosphate + hexadecanoyl-CoA = 1-(9Z)-octadecenoyl-2-hexadecanoyl-sn-glycero-3-phosphate + CoA. It carries out the reaction heptadecanoyl-CoA + 1-(9Z-octadecenoyl)-sn-glycero-3-phosphate = 1-(9Z)-octadecenoyl-2-heptadecanoyl-sn-glycero-3-phosphate + CoA. It catalyses the reaction 1-(9Z-octadecenoyl)-sn-glycero-3-phosphate + octadecanoyl-CoA = 1-(9Z-octadecenoyl)-2-octadecanoyl-sn-glycero-3-phosphate + CoA. The enzyme catalyses 1-(9Z-octadecenoyl)-sn-glycero-3-phosphate + (9Z,12Z)-octadecadienoyl-CoA = 1-(9Z)-octadecenoyl-2-(9Z,12Z)-octadecadienoyl-sn-glycero-3-phosphate + CoA. The catalysed reaction is 1-(9Z-octadecenoyl)-sn-glycero-3-phosphate + tetradecanoyl-CoA = 1-(9Z)-octadecenoyl-2-tetradecanoyl-sn-glycero-3-phosphate + CoA. It carries out the reaction pentadecanoyl-CoA + 1-(9Z-octadecenoyl)-sn-glycero-3-phosphate = 1-(9Z)-octadecenoyl-2-pentadecanoyl-sn-glycero-3-phosphate + CoA. It catalyses the reaction 1-hexadecanoyl-sn-glycero-3-phosphate + (9Z)-octadecenoyl-CoA = 1-hexadecanoyl-2-(9Z-octadecenoyl)-sn-glycero-3-phosphate + CoA. The enzyme catalyses 1-(9Z,12Z,15Z)-octadecatrienoyl-sn-glycero-3-phosphate + (9Z)-octadecenoyl-CoA = 1-(9Z,12Z,15Z)-octadecatrienoyl-2-(9Z)-octadecenoyl-sn-glycero-3-phosphate + CoA. The catalysed reaction is 1-(6Z,9Z,12Z-octadecatrienoyl)-sn-glycero-3-phosphate + (9Z)-octadecenoyl-CoA = (6Z,9Z,12Z)-octadecatrienoyl-2-(9Z)-octadecenoyl-sn-glycero-3-phosphate + CoA. It carries out the reaction 1-eicosanoyl-sn-glycero-3-phosphate + (9Z)-octadecenoyl-CoA = 1-eicosanoyl-2-(9Z)-octadecenoyl-sn-glycero-3-phosphate + CoA. It catalyses the reaction 1-tetradecanoyl-sn-glycerol 3-phosphate + (9Z)-octadecenoyl-CoA = 1-tetradecanoyl-2-(9Z)-octadecenoyl-sn-glycero-3-phosphate + CoA. The enzyme catalyses 1-(9Z-octadecenoyl)-sn-glycero-3-phosphate + (5Z,8Z,11Z,14Z)-eicosatetraenoyl-CoA = 1-(9Z)-octadecenoyl-2-(5Z,8Z,11Z,14Z)-eicosatetraenoyl-sn-glycero-3-phosphate + CoA. The catalysed reaction is 1-(9Z-octadecenoyl)-sn-glycero-3-phosphate + dodecanoyl-CoA = 1-(9Z)-octadecenoyl-2-dodecanoyl-sn-glycero-3-phosphate + CoA. It carries out the reaction (6Z)-octadecenoyl-CoA + 1-(9Z-octadecenoyl)-sn-glycero-3-phosphate = 1-(9Z)-octadecenoyl-2-(6Z)-octadecenoyl-sn-glycero-3-phosphate + CoA. It catalyses the reaction (11Z)-octadecenoyl-CoA + 1-(9Z-octadecenoyl)-sn-glycero-3-phosphate = 1-(9Z)-octadecenoyl-2-(11Z)-octadecenoyl-sn-glycero-3-phosphate + CoA. The enzyme catalyses (9Z)-hexadecenoyl-CoA + 1-(9Z-octadecenoyl)-sn-glycero-3-phosphate = 1-(9Z-octadecenoyl)-2-(9Z-hexadecenoyl)-sn-glycero-3-phosphate + CoA. Its pathway is phospholipid metabolism; CDP-diacylglycerol biosynthesis; CDP-diacylglycerol from sn-glycerol 3-phosphate: step 2/3. In terms of biological role, converts 1-acyl-sn-glycerol-3-phosphate (lysophosphatidic acid or LPA) into 1,2-diacyl-sn-glycerol-3-phosphate (phosphatidic acid or PA) by incorporating an acyl moiety at the sn-2 position of the glycerol backbone. This Ovis aries (Sheep) protein is 1-acyl-sn-glycerol-3-phosphate acyltransferase alpha (AGPAT1).